The sequence spans 359 residues: MTLESMMACCLSDEVKESKRINAEIEKQLRRDKRDARRELKLLLLGTGESGKSTFIKQMRIIHGAGYSEEDKRGFTKLVYQNIFTAMQAMVRAMETLKILYKYEQNKANALLIREVDVEKVTTFEHQYVNAIKTLWSDPGVQECYDRRREFQLSDSAKYYLTDVDRIATVGYLPTQQDVLRVRVPTTGIIEYPFDLENIIFRMVDVGGQRSERRKWIHCFENVTSIMFLVALSEYDQVLVESDNENRMEESKALFRTIITYPWFQNSSVILFLNKKDLLEDKILHSHLVDYFPEFDGPQRDAQAAREFILKMFVDLNPDSDKIIYSHFTCATDTENIRFVFAAVKDTILQLNLKEYNLV.

2 S-palmitoyl cysteine lipidation sites follow: C9 and C10. The G-alpha domain maps to 38 to 359; that stretch reads RELKLLLLGT…QLNLKEYNLV (322 aa). Residues 41-54 are G1 motif; that stretch reads KLLLLGTGESGKST. GTP is bound by residues 46–53 and 180–183; these read GTGESGKS and LRVR. Residue S53 coordinates Mg(2+). The G2 motif stretch occupies residues 178–186; that stretch reads DVLRVRVPT. T186 provides a ligand contact to Mg(2+). A G3 motif region spans residues 201-210; it reads FRMVDVGGQR. The interval 270 to 277 is G4 motif; it reads ILFLNKKD. Residues 274-277 and A331 each bind GTP; that span reads NKKD. The G5 motif stretch occupies residues 329–334; the sequence is TCATDT.

The protein belongs to the G-alpha family. G(q) subfamily. In terms of assembly, g proteins are composed of 3 units; alpha, beta and gamma. The alpha chain contains the guanine nucleotide binding site. Interacts with RGS22. Interacts with NTSR1.

It is found in the cell membrane. Its subcellular location is the cytoplasm. The enzyme catalyses GTP + H2O = GDP + phosphate + H(+). Its function is as follows. Guanine nucleotide-binding proteins (G proteins) function as transducers downstream of G protein-coupled receptors (GPCRs) in numerous signaling cascades. The alpha chain contains the guanine nucleotide binding site and alternates between an active, GTP-bound state and an inactive, GDP-bound state. Signaling by an activated GPCR promotes GDP release and GTP binding. The alpha subunit has a low GTPase activity that converts bound GTP to GDP, thereby terminating the signal. Both GDP release and GTP hydrolysis are modulated by numerous regulatory proteins. Signaling is mediated via phospholipase C-beta-dependent inositol lipid hydrolysis for signal propagation: activates phospholipase C-beta: following GPCR activation, GNA11 activates PLC-beta (PLCB1, PLCB2, PLCB3 or PLCB4), leading to production of diacylglycerol (DAG) and inositol 1,4,5-trisphosphate (IP3). Transduces FFAR4 signaling in response to long-chain fatty acids (LCFAs). Together with GNAQ, required for heart development. In the respiratory epithelium, transmits OXGR1-dependent signals that lead to downstream intracellular Ca(2+) release and mucocilliary clearance of airborne pathogens. The chain is Guanine nucleotide-binding protein subunit alpha-11 (Gna11) from Mus musculus (Mouse).